Consider the following 72-residue polypeptide: UPF0154 protein RBAM_017710 (72 aa).

Residues 4 to 24 traverse the membrane as a helical segment; it reads WVGILVGVVALLIGVALGFFI.

Belongs to the UPF0154 family.

The protein localises to the cell membrane. In Bacillus velezensis (strain DSM 23117 / BGSC 10A6 / LMG 26770 / FZB42) (Bacillus amyloliquefaciens subsp. plantarum), this protein is UPF0154 protein RBAM_017710.